The following is a 674-amino-acid chain: MQSREDAPRSRRLASPRGGKRPKKIHKPTVSAFFTGPEELKDTAHSAALLAQLKSFYDARLLCDVTIEVVTPGSGPGTGRLFPCNRNVLAAACPYFKSMFTGGMYESQQASVTMHDVDAESFEVLVDYCYTGRVSLSEANVERLYAASDMLQLEYVREACASFLARRLDLTNCTAILKFADAFGHRKLRSQAQSYIAQNFKQLSHMGSIREETLADLTLAQLLAVLRLDSLDVESEQTVCHVAVQWLEAAPKERGPSAAEVFKCVRWMHFTEEDQDYLEGLLTKPIVKKYCLDVIEGALQMRYGDLLYKSLVPVPNSSSSSSSSNSLVSAAENPPQRLGMCAKEMVIFFGHPRDPFLCCDPYSGDLYKVPSPLTCLAHTRTVTTLAVCISPDHDIYLAAQPRTDLWVYKPAQNSWQQLADRLLCREGMDVAYLNGYIYILGGRDPITGVKLKEVECYNVKRNQWALVAPLPHSFLSFDLMVIRDYLYALNSKRMFCYDPSHNMWLKCVSLKRNDFQEACVFNEEIYCICDIPVMKVYNPVRAEWRQMNNIPLVSETNNYRIIKHGQKLLLITSRTPQWKKNRVTVYEYDIRGDQWINIGTTLGLLQFDSNFFCLSARVYPSCLEPGQSFLTEEEEIPSESSTEWDLGGFSEPDSESGSSSSLSDDDFWVRVAPQ.

Residues 1–28 form a disordered region; the sequence is MQSREDAPRSRRLASPRGGKRPKKIHKP. A compositionally biased stretch (basic residues) spans 10-27; the sequence is SRRLASPRGGKRPKKIHK. Residues 63–138 form the BTB domain; that stretch reads CDVTIEVVTP…CYTGRVSLSE (76 aa). 6 Kelch repeats span residues 386 to 435, 436 to 484, 486 to 523, 524 to 564, 567 to 616, and 642 to 673; these read AVCI…YLNG, YIYI…VIRD, LYALNSKRMFCYDPSHNMWLKCVSLKRNDFQEACVFNE, EIYC…IIKH, KLLL…CLSA, and TEWDLGGFSEPDSESGSSSSLSDDDFWVRVAP. Residues 631–674 are disordered; it reads TEEEEIPSESSTEWDLGGFSEPDSESGSSSSLSDDDFWVRVAPQ. Positions 668 to 671 match the ATG8 interaction motif (AIM) motif; the sequence is WVRV.

As to quaternary structure, core component of a BCR3 (BTB-CUL3-RBX1) E3 ubiquitin ligase complex, also named Cul3-RING ubiquitin ligase complex CUL3(KBTBD6/7), composed of CUL3, RBX1, KBTBD6 and KBTBD7. Interacts with GABARAP; the interaction is direct and is required for the ubiquitination of TIAM1. Interacts with GABARAPL1, GABARAPL2 and MAP1LC3B; the interaction is direct.

The protein localises to the cytoplasm. The protein resides in the nucleus. The protein operates within protein modification; protein ubiquitination. Functionally, as part of the CUL3(KBTBD6/7) E3 ubiquitin ligase complex functions as a substrate adapter for the RAC1 guanine exchange factor (GEF) TIAM1, mediating its 'Lys-48' ubiquitination and proteasomal degradation. By controlling this ubiquitination, regulates RAC1 signal transduction and downstream biological processes including the organization of the cytoskeleton, cell migration and cell proliferation. Ubiquitination of TIAM1 requires the membrane-associated protein GABARAP which may restrict locally the activity of the complex. The protein is Kelch repeat and BTB domain-containing protein 6 of Homo sapiens (Human).